The chain runs to 501 residues: Spore development regulator VOSA (501 aa).

3 disordered regions span residues 26–55 (GQFG…GQEP), 67–88 (PQRA…IDPP), and 228–274 (AMTT…DTRG). The segment covering 35-50 (PPQAETQMSAQASAQA) has biased composition (polar residues). Positions 52 to 223 (GQEPEPDYKL…SDQGVRLRVR (172 aa)) constitute a Velvet domain. 2 stretches are compositionally biased toward basic and acidic residues: residues 67 to 85 (PQRA…RKPI) and 237 to 252 (QHAE…DRKQ). Residues 253–271 (TSAVSRHSSINENDSTPTD) are compositionally biased toward polar residues. Positions 364–371 (MSSHHGYT) match the Nuclear localization signal motif. Disordered regions lie at residues 378–455 (FAPH…QQTP) and 474–501 (PGQL…EPGA).

Belongs to the velvet family. VosA subfamily. As to quaternary structure, forms a heterodimeric complex with VELB; the formation of the VELB-VOSA complex is light-dependent.

It is found in the nucleus. Functionally, component of the VELB-VOSA heterodimeric complex that plays a dual role in activating genes associated with spore maturation and repressing certain development-associated genes. The complex binds DNA through the DNA-binding domain of VOSA that recognizes an 11-nucleotide consensus sequence 5'-CTGGCCGCGGC-3' consisting of two motifs in the promoters of key developmental regulatory genes. Appears dispensable for the development and pathogenicity. This chain is Spore development regulator VOSA, found in Pyricularia oryzae (strain 70-15 / ATCC MYA-4617 / FGSC 8958) (Rice blast fungus).